A 62-amino-acid chain; its full sequence is UPF0434 protein BP2767 (62 aa).

This sequence belongs to the UPF0434 family.

The protein is UPF0434 protein BP2767 of Bordetella pertussis (strain Tohama I / ATCC BAA-589 / NCTC 13251).